The following is a 398-amino-acid chain: Succinate--CoA ligase [ADP-forming] subunit beta (398 aa).

One can recognise an ATP-grasp domain in the interval 9–254; sequence KRLLHEYGAP…LSEEDPKEIE (246 aa). ATP-binding positions include Lys-46, 53 to 55, Glu-109, Ala-112, and Glu-117; that span reads GRG. Mg(2+) is bound by residues Asn-209 and Asp-223. Residues Asn-274 and 331 to 333 each bind substrate; that span reads GIM.

This sequence belongs to the succinate/malate CoA ligase beta subunit family. As to quaternary structure, heterotetramer of two alpha and two beta subunits. Mg(2+) serves as cofactor.

The enzyme catalyses succinate + ATP + CoA = succinyl-CoA + ADP + phosphate. The catalysed reaction is GTP + succinate + CoA = succinyl-CoA + GDP + phosphate. Its pathway is carbohydrate metabolism; tricarboxylic acid cycle; succinate from succinyl-CoA (ligase route): step 1/1. In terms of biological role, succinyl-CoA synthetase functions in the citric acid cycle (TCA), coupling the hydrolysis of succinyl-CoA to the synthesis of either ATP or GTP and thus represents the only step of substrate-level phosphorylation in the TCA. The beta subunit provides nucleotide specificity of the enzyme and binds the substrate succinate, while the binding sites for coenzyme A and phosphate are found in the alpha subunit. This Bartonella tribocorum (strain CIP 105476 / IBS 506) protein is Succinate--CoA ligase [ADP-forming] subunit beta.